The following is a 157-amino-acid chain: Endoribonuclease YbeY (157 aa).

Zn(2+) is bound by residues histidine 114, histidine 118, and histidine 124.

It belongs to the endoribonuclease YbeY family. It depends on Zn(2+) as a cofactor.

The protein localises to the cytoplasm. Its function is as follows. Single strand-specific metallo-endoribonuclease involved in late-stage 70S ribosome quality control and in maturation of the 3' terminus of the 16S rRNA. In Serratia proteamaculans (strain 568), this protein is Endoribonuclease YbeY.